We begin with the raw amino-acid sequence, 1464 residues long: Glutamate receptor ionotropic, NMDA 2A (1464 aa).

The first 22 residues, Met-1–Ala-22, serve as a signal peptide directing secretion. The Extracellular portion of the chain corresponds to Pro-23–Ser-556. Zn(2+) is bound at residue His-44. Asn-75 is a glycosylation site (N-linked (GlcNAc...) asparagine). Cys-87 and Cys-320 are oxidised to a cystine. Zn(2+) is bound by residues His-128, Glu-266, and Asp-282. Asn-340, Asn-380, Asn-443, and Asn-444 each carry an N-linked (GlcNAc...) asparagine glycan. 2 cysteine pairs are disulfide-bonded: Cys-429–Cys-455 and Cys-436–Cys-456. L-glutamate is bound by residues Ser-511, Thr-513, and Arg-518. The N-linked (GlcNAc...) asparagine glycan is linked to Asn-541. Residues Val-557–Phe-576 form a helical membrane-spanning segment. At Glu-577 to Thr-600 the chain is on the cytoplasmic side. Residues Phe-599–Gln-620 are pore-forming. The discontinuously helical intramembrane region spans Ile-601–Asn-615. The Cytoplasmic segment spans residues Ser-616–Thr-625. The chain crosses the membrane as a helical span at residues Thr-626–Thr-646. Over Ala-647–Ile-814 the chain is Extracellular. Asn-687 carries N-linked (GlcNAc...) asparagine glycosylation. Ser-689, Thr-690, and Asp-731 together coordinate L-glutamate. Cys-745 and Cys-800 are disulfide-bonded. Residues Asp-815 to Phe-835 form a helical membrane-spanning segment. The Cytoplasmic portion of the chain corresponds to Ile-836–Val-1464. Phosphoserine occurs at positions 882, 890, and 929. Composition is skewed to polar residues over residues Ser-1001 to Pro-1010 and Gln-1023 to Ser-1032. Disordered stretches follow at residues Ser-1001–Arg-1088 and Pro-1148–Asn-1180. Residue Ser-1025 is modified to Phosphoserine. Composition is skewed to basic and acidic residues over residues Gln-1033–Thr-1043 and Leu-1052–Ile-1061. A phosphoserine mark is found at Ser-1059 and Ser-1062. A compositionally biased stretch (basic and acidic residues) spans Cys-1070 to Lys-1087. The segment covering Leu-1165–Asn-1180 has biased composition (polar residues). Ser-1198 and Ser-1291 each carry phosphoserine. A disordered region spans residues Lys-1335–Arg-1372. Residues Ser-1462–Val-1464 carry the PDZ-binding motif.

The protein belongs to the glutamate-gated ion channel (TC 1.A.10.1) family. NR2A/GRIN2A subfamily. As to quaternary structure, heterotetramer. Forms heterotetrameric channels composed of two GluN1/zeta subunits (GRIN1), and two identical GluN2/epsilon subunits (GRIN2A, GRIN2B, GRIN2C or GRIN2D) or GluN3 subunits (GRIN3A or GRIN3B) (in vitro). Can also form heterotetrameric channels that contain at least two GluN1 subunits and at least two different GluN2 subunits (or a combination of one GluN2 and one GluN3 subunits) (in vitro). In vivo, the subunit composition may depend on the expression levels of the different subunits. Found in a complex with GRIN1, GRIN3A and PPP2CB. Found in a complex with GRIN1 and GRIN3B. Interacts with AIP1. Interacts with HIP1 and NETO1. Interacts with SNX27 (via PDZ domain); the interaction is required for recycling to the plasma membrane when endocytosed and prevent degradation in lysosomes. Interacts with PDZ domains of PATJ and DLG4. Interacts with LRFN2. Interacts with RPH3A and DLG4; this ternary complex regulates NMDA receptor composition at postsynaptic membranes. Interacts with SORCS2. Interacts with ARC; preventing ARC oligomerization. Interacts (via the extreme C-terminus) with FRMPD2 (the second PDZ domain); the interaction is direct and is likely to promote NMDAR-mediated neural signal transmission. GRIN2A binds FRMPD2 with lower affinity than GRIN2B.

The protein resides in the cell projection. Its subcellular location is the dendritic spine. It localises to the cell membrane. The protein localises to the synapse. It is found in the postsynaptic cell membrane. The protein resides in the cytoplasmic vesicle membrane. The enzyme catalyses Ca(2+)(in) = Ca(2+)(out). The catalysed reaction is Na(+)(in) = Na(+)(out). It carries out the reaction K(+)(in) = K(+)(out). In terms of biological role, component of N-methyl-D-aspartate (NMDA) receptors (NMDARs) that function as heterotetrameric, ligand-gated cation channels with high calcium permeability and voltage-dependent block by Mg(2+). NMDARs participate in synaptic plasticity for learning and memory formation by contributing to the slow phase of excitatory postsynaptic current, long-term synaptic potentiation, and learning. Channel activation requires binding of the neurotransmitter L-glutamate to the GluN2 subunit, glycine or D-serine binding to the GluN1 subunit, plus membrane depolarization to eliminate channel inhibition by Mg(2+). NMDARs mediate simultaneously the potasium efflux and the influx of calcium and sodium. Each GluN2 subunit confers differential attributes to channel properties, including activation, deactivation and desensitization kinetics, pH sensitivity, Ca2(+) permeability, and binding to allosteric modulators. Participates in the synaptic plasticity regulation through activation by the L-glutamate releaseed by BEST1, into the synaptic cleft, upon F2R/PAR-1 activation in astrocyte. In Pan troglodytes (Chimpanzee), this protein is Glutamate receptor ionotropic, NMDA 2A.